We begin with the raw amino-acid sequence, 169 residues long: MILGLALIPSKSFQEAVDSYRKRYDKQYSRIKPHVTIKAPFEIEDGDLDSVIEQVRARINGIPAVEVHATKASSFKPTNNVIYFKVAKTDDLEELFNRFNGEDFYGEAEHVFVPHFTIAQGLSSQEFEDIFGQVALAGVDHKEIIDELTLLRFDDDEDKWKVIETFKLA.

Residue H34 is the Proton donor of the active site. Short sequence motifs (HXTX) lie at residues 34–37 (HVTI) and 115–118 (HFTI). H115 (proton acceptor) is an active-site residue.

This sequence belongs to the 2H phosphoesterase superfamily. YjcG family.

The polypeptide is Putative phosphoesterase SAR0985 (Staphylococcus aureus (strain MRSA252)).